The following is a 156-amino-acid chain: Acyl carrier protein, mitochondrial (156 aa).

The transit peptide at 1–68 (MASRVLSAYV…GRVTQLCRQY (68 aa)) directs the protein to the mitochondrion. A Carrier domain is found at 77–152 (EGIQDRVLYV…EIVDYIADKK (76 aa)). An N6-acetyllysine modification is found at Lys88. An O-(pantetheine 4'-phosphoryl)serine modification is found at Ser112.

Belongs to the acyl carrier protein (ACP) family. Mammalian complex I is composed of 45 different subunits. Interacts with ETFRF1. Identified in a complex composed of MALSU1, MIEF1 upstream open reading frame protein and NDUFAB1; within the trimeric complex, MIEF1 upstream open reading frame protein functions as a bridging scaffold that interacts with MALSU1 on one side, and with NDUFAB1 on the other side. The complex interacts with the mitochondrial large ribosomal subunit. Interacts with alpha-1-microglobulin chain; this interaction is required for the maintenance of mitochondrial redox homeostasis. Component of the mitochondrial core iron-sulfur cluster (ISC) complex composed of NFS1, LYRM4, NDUFAB1, ISCU, FXN, and FDX2; this complex is a heterohexamer containing two copies of each monomer. Component of the cyteine desulfurase complex composed of NFS1, LYRM4 and NDUFAB1; this complex contributes to the stability and cysteine desulfurase activity of NFS1. Post-translationally, phosphopantetheinylation at Ser-112 is essential for interactions with LYR motif-containing proteins.

The protein localises to the mitochondrion. Functionally, carrier of the growing fatty acid chain in fatty acid biosynthesis. Accessory and non-catalytic subunit of the mitochondrial membrane respiratory chain NADH dehydrogenase (Complex I), which functions in the transfer of electrons from NADH to the respiratory chain. Accessory protein, of the core iron-sulfur cluster (ISC) assembly complex, that regulates, in association with LYRM4, the stability and the cysteine desulfurase activity of NFS1 and participates in the [2Fe-2S] clusters assembly on the scaffolding protein ISCU. The core iron-sulfur cluster (ISC) assembly complex is involved in the de novo synthesis of a [2Fe-2S] cluster, the first step of the mitochondrial iron-sulfur protein biogenesis. This process is initiated by the cysteine desulfurase complex (NFS1:LYRM4:NDUFAB1) that produces persulfide which is delivered on the scaffold protein ISCU in a FXN-dependent manner. Then this complex is stabilized by FDX2 which provides reducing equivalents to accomplish the [2Fe-2S] cluster assembly. Finally, the [2Fe-2S] cluster is transferred from ISCU to chaperone proteins, including HSCB, HSPA9 and GLRX5. This chain is Acyl carrier protein, mitochondrial, found in Pongo pygmaeus (Bornean orangutan).